We begin with the raw amino-acid sequence, 585 residues long: Bifunctional lycopene cyclase/phytoene synthase (585 aa).

The tract at residues Met1–Asn243 is lycopene beta-cyclase. The next 7 helical transmembrane spans lie at Phe3 to Leu23, Lys35 to Ile55, Ile75 to Leu97, Leu123 to His141, Leu151 to Ile171, Gly173 to Val193, and Ile221 to Phe241. The phytoene synthase stretch occupies residues Thr250 to Ala585.

In the N-terminal section; belongs to the lycopene beta-cyclase family. It in the C-terminal section; belongs to the phytoene/squalene synthase family.

Its subcellular location is the membrane. It catalyses the reaction all-trans-lycopene = gamma-carotene. The catalysed reaction is gamma-carotene = all-trans-beta-carotene. It carries out the reaction 2 (2E,6E,10E)-geranylgeranyl diphosphate = 15-cis-phytoene + 2 diphosphate. It functions in the pathway carotenoid biosynthesis; beta-carotene biosynthesis. The protein operates within carotenoid biosynthesis; phytoene biosynthesis; all-trans-phytoene from geranylgeranyl diphosphate: step 1/1. Functionally, bifunctional enzyme that catalyzes the reactions from geranylgeranyl diphosphate to phytoene (phytoene synthase) and lycopene to beta-carotene via the intermediate gamma-carotene (lycopene cyclase). In Phaeosphaeria nodorum (strain SN15 / ATCC MYA-4574 / FGSC 10173) (Glume blotch fungus), this protein is Bifunctional lycopene cyclase/phytoene synthase.